The sequence spans 707 residues: Polyribonucleotide nucleotidyltransferase (707 aa).

Mg(2+) is bound by residues Asp486 and Asp492. Positions 553–612 (PRIHTIKINPEKIKDVIGKGGSVIRALTEETGTTIEIEDDGTVKIAATDGDKAKHAIRRI) constitute a KH domain. An S1 motif domain is found at 622-690 (GRIYQGKVTR…RQGRVRLSIK (69 aa)).

Belongs to the polyribonucleotide nucleotidyltransferase family. Component of the RNA degradosome, which is a multiprotein complex involved in RNA processing and mRNA degradation. It depends on Mg(2+) as a cofactor.

The protein resides in the cytoplasm. It catalyses the reaction RNA(n+1) + phosphate = RNA(n) + a ribonucleoside 5'-diphosphate. Its function is as follows. Involved in mRNA degradation. Catalyzes the phosphorolysis of single-stranded polyribonucleotides processively in the 3'- to 5'-direction. The sequence is that of Polyribonucleotide nucleotidyltransferase from Edwardsiella ictaluri (strain 93-146).